The chain runs to 383 residues: ATP phosphoribosyltransferase regulatory subunit (383 aa).

Belongs to the class-II aminoacyl-tRNA synthetase family. HisZ subfamily. In terms of assembly, heteromultimer composed of HisG and HisZ subunits.

Its subcellular location is the cytoplasm. It participates in amino-acid biosynthesis; L-histidine biosynthesis; L-histidine from 5-phospho-alpha-D-ribose 1-diphosphate: step 1/9. Functionally, required for the first step of histidine biosynthesis. May allow the feedback regulation of ATP phosphoribosyltransferase activity by histidine. This chain is ATP phosphoribosyltransferase regulatory subunit, found in Neisseria gonorrhoeae (strain NCCP11945).